The following is a 900-amino-acid chain: DNA mismatch repair protein MutS (900 aa).

Residues 1–88 (MPGPSDDPTE…PAWAHHSQVD (88 aa)) form a disordered region. Basic and acidic residues predominate over residues 56 to 68 (APADHNAADHDSN). 714-721 (GPNASGKS) serves as a coordination point for ATP.

This sequence belongs to the DNA mismatch repair MutS family.

In terms of biological role, this protein is involved in the repair of mismatches in DNA. It is possible that it carries out the mismatch recognition step. This protein has a weak ATPase activity. The polypeptide is DNA mismatch repair protein MutS (Parasynechococcus marenigrum (strain WH8102)).